A 126-amino-acid polypeptide reads, in one-letter code: Prefoldin subunit beta (126 aa).

Belongs to the prefoldin subunit beta family. As to quaternary structure, heterohexamer of two alpha and four beta subunits.

It is found in the cytoplasm. In terms of biological role, molecular chaperone capable of stabilizing a range of proteins. Seems to fulfill an ATP-independent, HSP70-like function in archaeal de novo protein folding. The chain is Prefoldin subunit beta (pfdB) from Pyrobaculum aerophilum (strain ATCC 51768 / DSM 7523 / JCM 9630 / CIP 104966 / NBRC 100827 / IM2).